The chain runs to 396 residues: S-adenosylmethionine synthase 4 (396 aa).

Glu13 serves as a coordination point for Mg(2+). An ATP-binding site is contributed by His19. Glu47 provides a ligand contact to K(+). L-methionine-binding residues include Glu60 and Gln103. Residues 171-173 (DGK), 239-242 (SGRF), Asp250, 256-257 (RK), Ala273, Lys277, and Lys281 each bind ATP. Asp250 contacts L-methionine. Lys281 is an L-methionine binding site.

Belongs to the AdoMet synthase family. As to quaternary structure, homotetramer. It depends on Mn(2+) as a cofactor. Requires Mg(2+) as cofactor. Co(2+) is required as a cofactor. K(+) serves as cofactor. Expressed in roots, stems and leaves (at protein level).

It is found in the cytoplasm. It carries out the reaction L-methionine + ATP + H2O = S-adenosyl-L-methionine + phosphate + diphosphate. It participates in amino-acid biosynthesis; S-adenosyl-L-methionine biosynthesis; S-adenosyl-L-methionine from L-methionine: step 1/1. In terms of biological role, catalyzes the formation of S-adenosylmethionine from methionine and ATP. The reaction comprises two steps that are both catalyzed by the same enzyme: formation of S-adenosylmethionine (AdoMet) and triphosphate, and subsequent hydrolysis of the triphosphate. May be involved in the synthesis of betain in response to abiotic stress such as high salinity. This is S-adenosylmethionine synthase 4 (SAMS4) from Atriplex nummularia (Old man saltbush).